Reading from the N-terminus, the 753-residue chain is CCR4-NOT transcription complex subunit 3 (753 aa).

The tract at residues 240 to 534 (ATSPPSHSHM…PPQFSTAPEI (295 aa)) is disordered. Positions 257-268 (SSSTPTSTTSSS) are enriched in low complexity. A compositionally biased stretch (basic and acidic residues) spans 284-293 (DDKKRGRSTD). A Phosphothreonine modification is found at Thr292. Over residues 294–315 (SEVSQSPAKNGSKPVHSNQHPQ) the composition is skewed to polar residues. Ser299 is subject to Phosphoserine. Positions 317 to 330 (PAVPPTYPSGPPPA) are enriched in pro residues. Low complexity predominate over residues 350 to 376 (PSALGPKASPAPSHNSGTPAPYAQAVA). The segment covering 396–408 (SGGGGGGSGGGGS) has biased composition (gly residues). The span at 424-433 (NGATSYSSVV) shows a compositional bias: polar residues. The span at 441 to 457 (ALSSSGGNNASSQALGP) shows a compositional bias: low complexity. The segment covering 458–467 (PSGPHNPPPS) has biased composition (pro residues). Residues 479–491 (GAGGVAPGSGNNS) are compositionally biased toward gly residues. Ser542 is subject to Phosphoserine. The tract at residues 661–753 (EFYQRLSTET…YRYLEDRDLQ (93 aa)) is repressor domain.

The protein belongs to the CNOT2/3/5 family. As to quaternary structure, component of the CCR4-NOT complex; distinct complexes seem to exist that differ in the participation of probably mutually exclusive catalytic subunits. In the complex interacts directly with CNOT2. Interacts with TIP120B and NANOS2. Interacts with EBF1. Interacts in an RNA-independent manner with BICC1 (via KH domains). In terms of tissue distribution, ubiquitous. Highly expressed in brain, heart, thymus, spleen, kidney, liver, small intestine, lung and peripheral blood leukocytes.

The protein localises to the cytoplasm. It localises to the nucleus. The protein resides in the P-body. Functionally, component of the CCR4-NOT complex which is one of the major cellular mRNA deadenylases and is linked to various cellular processes including bulk mRNA degradation, miRNA-mediated repression, translational repression during translational initiation and general transcription regulation. Additional complex functions may be a consequence of its influence on mRNA expression. May be involved in metabolic regulation; may be involved in recruitment of the CCR4-NOT complex to deadenylation target mRNAs involved in energy metabolism. Involved in mitotic progression and regulation of the spindle assembly checkpoint by regulating the stability of MAD1L1 mRNA. Can repress transcription and may link the CCR4-NOT complex to transcriptional regulation; the repressive function may involve histone deacetylases. Involved in the maintenance of embryonic stem (ES) cell identity. This Homo sapiens (Human) protein is CCR4-NOT transcription complex subunit 3.